A 297-amino-acid polypeptide reads, in one-letter code: Glycerol-3-phosphate dehydrogenase [NAD(P)+] (297 aa).

Residues Trp-11, Arg-30, and Lys-79 each contribute to the NADPH site. Sn-glycerol 3-phosphate contacts are provided by Lys-79, Gly-107, and Ser-109. Ala-111 contributes to the NADPH binding site. Residues Lys-161, Asp-214, Ser-224, Arg-225, and Asn-226 each contribute to the sn-glycerol 3-phosphate site. The active-site Proton acceptor is Lys-161. Arg-225 is an NADPH binding site. The NADPH site is built by Val-249 and Glu-251.

The protein belongs to the NAD-dependent glycerol-3-phosphate dehydrogenase family.

The protein localises to the cytoplasm. It catalyses the reaction sn-glycerol 3-phosphate + NAD(+) = dihydroxyacetone phosphate + NADH + H(+). The catalysed reaction is sn-glycerol 3-phosphate + NADP(+) = dihydroxyacetone phosphate + NADPH + H(+). Its pathway is membrane lipid metabolism; glycerophospholipid metabolism. In terms of biological role, catalyzes the reduction of the glycolytic intermediate dihydroxyacetone phosphate (DHAP) to sn-glycerol 3-phosphate (G3P), the key precursor for phospholipid synthesis. The protein is Glycerol-3-phosphate dehydrogenase [NAD(P)+] of Wolinella succinogenes (strain ATCC 29543 / DSM 1740 / CCUG 13145 / JCM 31913 / LMG 7466 / NCTC 11488 / FDC 602W) (Vibrio succinogenes).